A 305-amino-acid polypeptide reads, in one-letter code: NAD kinase 2 (305 aa).

The active-site Proton acceptor is the D78. NAD(+)-binding positions include 78–79 (DG), 152–153 (NE), D182, 193–198 (TAYSLS), and N251.

Belongs to the NAD kinase family. It depends on a divalent metal cation as a cofactor.

The protein localises to the cytoplasm. It catalyses the reaction NAD(+) + ATP = ADP + NADP(+) + H(+). Involved in the regulation of the intracellular balance of NAD and NADP, and is a key enzyme in the biosynthesis of NADP. Catalyzes specifically the phosphorylation on 2'-hydroxyl of the adenosine moiety of NAD to yield NADP. The sequence is that of NAD kinase 2 from Trichormus variabilis (strain ATCC 29413 / PCC 7937) (Anabaena variabilis).